We begin with the raw amino-acid sequence, 105 residues long: uncharacterized protein (105 aa).

This is an uncharacterized protein from Saccharomyces cerevisiae (strain ATCC 204508 / S288c) (Baker's yeast).